Consider the following 87-residue polypeptide: Small ribosomal subunit protein eS21 (87 aa).

It belongs to the eukaryotic ribosomal protein eS21 family. Component of the small ribosomal subunit. Mature ribosomes consist of a small (40S) and a large (60S) subunit. The 40S subunit contains about 33 different proteins and 1 molecule of RNA (18S). The 60S subunit contains about 49 different proteins and 3 molecules of RNA (25S, 5.8S and 5S).

It localises to the cytoplasm. In terms of biological role, required for the processing of the 20S rRNA-precursor to mature 18S rRNA in a late step of the maturation of 40S ribosomal subunits. Has a physiological role leading to 18S rRNA stability. The sequence is that of Small ribosomal subunit protein eS21 (RPS21) from Eremothecium gossypii (strain ATCC 10895 / CBS 109.51 / FGSC 9923 / NRRL Y-1056) (Yeast).